We begin with the raw amino-acid sequence, 448 residues long: UDP-N-acetylmuramoylalanine--D-glutamate ligase (448 aa).

116–122 (GSNAKST) contacts ATP.

This sequence belongs to the MurCDEF family.

The protein localises to the cytoplasm. It carries out the reaction UDP-N-acetyl-alpha-D-muramoyl-L-alanine + D-glutamate + ATP = UDP-N-acetyl-alpha-D-muramoyl-L-alanyl-D-glutamate + ADP + phosphate + H(+). Its pathway is cell wall biogenesis; peptidoglycan biosynthesis. Its function is as follows. Cell wall formation. Catalyzes the addition of glutamate to the nucleotide precursor UDP-N-acetylmuramoyl-L-alanine (UMA). This is UDP-N-acetylmuramoylalanine--D-glutamate ligase from Pseudomonas syringae pv. syringae (strain B728a).